Here is a 276-residue protein sequence, read N- to C-terminus: MANFTVADVKRLRALTGAGMLDCKSVLVETDGNFDKAVESLRIKGAKDVGKRAERATAEGLVAAKDGALIELNCETDFVAKNAEFQKLANQIVGVVAAAKIVDVDALKGASVGDKTVEQAIAELAAKIGEKLKLRRAAIFNGTVATYLHKRAADLPPAVGVLVEYGAGTDAANSTAAAHAAALQIAALKARFLSRDDVPEDVLASERRIAEETAKAAGKPEQSLPKIVEGRLNGFFKDSVLLEQPSVFDNKKTVKVLLDEAGVTVTRFVRFEVGQA.

Positions 76–79 are involved in Mg(2+) ion dislocation from EF-Tu; sequence TDFV.

Belongs to the EF-Ts family.

It is found in the cytoplasm. Its function is as follows. Associates with the EF-Tu.GDP complex and induces the exchange of GDP to GTP. It remains bound to the aminoacyl-tRNA.EF-Tu.GTP complex up to the GTP hydrolysis stage on the ribosome. The protein is Elongation factor Ts of Mycobacterium leprae (strain Br4923).